The following is a 377-amino-acid chain: 3-(aryl)acrylate reductase (377 aa).

Residues 121–130 (FALTEPGAGS), 154–156 (FIT), Arg-266, Gln-277, and 334–338 (QIHGG) each bind FAD. Glu-361 (proton acceptor) is an active-site residue. 363 to 365 (TSE) is an FAD binding site.

This sequence belongs to the acyl-CoA dehydrogenase family. FAD is required as a cofactor.

The catalysed reaction is 3-phenylpropanoate + oxidized [electron-transfer flavoprotein] + H(+) = (E)-cinnamate + reduced [electron-transfer flavoprotein]. It catalyses the reaction phloretate + oxidized [electron-transfer flavoprotein] + H(+) = (E)-4-coumarate + reduced [electron-transfer flavoprotein]. The enzyme catalyses indole-3-propanoate + oxidized [electron-transfer flavoprotein] + H(+) = (E)-3-(indol-3-yl)acrylate + reduced [electron-transfer flavoprotein]. The protein operates within amino-acid degradation. Essential for the reductive metabolism of L-phenylalanine, L-tyrosine and L-tryptophan. Catalyzes the reduction of phenylacrylic acid to phenylpropionic acid, 4-hydroxy-phenylacrylic acid to 4-hydroxy-phenylpropionic acid, and indoleacrylic acid to indolepropionic acid. The sequence is that of 3-(aryl)acrylate reductase from Clostridium sporogenes (strain ATCC 15579).